The following is a 323-amino-acid chain: Cytoskeleton protein RodZ (323 aa).

Residues 1–111 (MNTEASQDKT…LGKRRKKRDG (111 aa)) are Cytoplasmic-facing. The region spanning 19–71 (LRQAREQLGLSQQAVAERLCLKMSTVRDIEEDNLSADLASTFVRGYIRSYAKL) is the HTH cro/C1-type domain. The H-T-H motif DNA-binding region spans 30 to 49 (QQAVAERLCLKMSTVRDIEE). A helical; Signal-anchor for type II membrane protein membrane pass occupies residues 112 to 132 (WLMSFTWLIVFVVVGLTGAWW). The Periplasmic portion of the chain corresponds to 133–323 (WQNHKAQQEE…RVARLTVAAQ (191 aa)). Composition is skewed to polar residues over residues 149-172 (QSSAQLSQNNEGQSVPLTDSNADN) and 179-214 (NGSTPVDTGVAPQQSQTPAVSGSATAQQPAVVSPSQ). The tract at residues 149 to 236 (QSSAQLSQNN…APLPTADAGV (88 aa)) is disordered. A compositionally biased stretch (low complexity) spans 215–234 (TTLPETTPAAPTAPLPTADA).

This sequence belongs to the RodZ family.

It is found in the cell inner membrane. Functionally, cytoskeletal protein that is involved in cell-shape control through regulation of the length of the long axis. This is Cytoskeleton protein RodZ from Serratia proteamaculans (strain 568).